A 43-amino-acid chain; its full sequence is Potassium channel toxin gamma-KTx 4.4 (43 aa).

Cystine bridges form between Cys5–Cys23, Cys11–Cys34, Cys20–Cys39, and Cys24–Cys41.

Belongs to the ergtoxin family. Gamma-KTx 4 subfamily. As to expression, expressed by the venom gland.

The protein localises to the secreted. In terms of biological role, reversibly blocks Kv11/ERG potassium channels. The protein is Potassium channel toxin gamma-KTx 4.4 of Centruroides exilicauda (Bark scorpion).